The primary structure comprises 124 residues: Small ribosomal subunit protein uS12 (124 aa).

Asp89 carries the 3-methylthioaspartic acid modification. Residues 104 to 124 (ATGVKDRKQGRSKYGAKRPKE) form a disordered region. Over residues 113–124 (GRSKYGAKRPKE) the composition is skewed to basic residues.

Belongs to the universal ribosomal protein uS12 family. In terms of assembly, part of the 30S ribosomal subunit. Contacts proteins S8 and S17. May interact with IF1 in the 30S initiation complex.

Functionally, with S4 and S5 plays an important role in translational accuracy. Interacts with and stabilizes bases of the 16S rRNA that are involved in tRNA selection in the A site and with the mRNA backbone. Located at the interface of the 30S and 50S subunits, it traverses the body of the 30S subunit contacting proteins on the other side and probably holding the rRNA structure together. The combined cluster of proteins S8, S12 and S17 appears to hold together the shoulder and platform of the 30S subunit. This is Small ribosomal subunit protein uS12 from Picosynechococcus sp. (strain ATCC 27264 / PCC 7002 / PR-6) (Agmenellum quadruplicatum).